A 330-amino-acid chain; its full sequence is MAQNLPTIALLATGGTIAGSGASASLGSYKSGELGIKELLKAIPSLNRLARIQGEQISNIGSQDMNEEVWFKLAKRAQELLDDSRIQGVVITHGTDTLEESAYFLNLVLRSTKPVVLVGAMRNAASLSADGALNLYNAVSVALNEKSANKGVLVVMDDNIFSAREVIKTHTTHTSTFKALNSGAIGSVYYGKTRYYMQPLRKHTTESEFSLSQLKTPLPKVDIIYTHAGMTPDLFQASLNSHAKGVVIAGVGNGNVSAGFLKAMQEASQMGVVIVRSSRVNSGEITSGEIDDKAFITSDNLNPQKARVLLQLALTKTNNKEKIQEMFEEY.

The Asparaginase/glutaminase domain maps to 6–330 (PTIALLATGG…EKIQEMFEEY (325 aa)). Threonine 16 functions as the O-isoaspartyl threonine intermediate in the catalytic mechanism. Residues serine 62 and 95-96 (TD) contribute to the substrate site.

It belongs to the asparaginase 1 family.

It localises to the cytoplasm. The enzyme catalyses L-asparagine + H2O = L-aspartate + NH4(+). This Helicobacter pylori (strain ATCC 700392 / 26695) (Campylobacter pylori) protein is Probable L-asparaginase (ansA).